We begin with the raw amino-acid sequence, 1062 residues long: Carbamoyl phosphate synthase pyrimidine-specific large chain (1062 aa).

The tract at residues 1–401 (MGKREDIKKI…SLLKAVRSLE (401 aa)) is carboxyphosphate synthetic domain. ATP contacts are provided by Arg-129, Arg-169, Gly-175, Gly-176, Lys-208, Ile-210, Glu-215, Gly-241, Val-242, His-243, Gln-284, and Glu-298. The ATP-grasp 1 domain occupies 133–327 (RALMKELNEP…IAKIAAKIAV (195 aa)). Positions 284, 298, and 300 each coordinate Mg(2+). Residues Gln-284, Glu-298, and Asn-300 each coordinate Mn(2+). The tract at residues 402-546 (AGVYHLDQPD…YGTYEEENES (145 aa)) is oligomerization domain. A carbamoyl phosphate synthetic domain region spans residues 547–929 (ERTDKKSILV…ALYKGLIASG (383 aa)). Positions 671 to 861 (EQTLVELNIP…MANVATKVML (191 aa)) constitute an ATP-grasp 2 domain. Residues Arg-707, Arg-746, Leu-748, Glu-752, Gly-777, Val-778, His-779, Ser-780, Gln-820, and Glu-832 each coordinate ATP. Mg(2+) contacts are provided by Gln-820, Glu-832, and Asn-834. Positions 820, 832, and 834 each coordinate Mn(2+). The MGS-like domain maps to 930-1062 (MSIPTHGSVL…FSAESMPVMQ (133 aa)). The tract at residues 930 to 1062 (MSIPTHGSVL…FSAESMPVMQ (133 aa)) is allosteric domain.

Belongs to the CarB family. Composed of two chains; the small (or glutamine) chain promotes the hydrolysis of glutamine to ammonia, which is used by the large (or ammonia) chain to synthesize carbamoyl phosphate. Tetramer of heterodimers (alpha,beta)4. The cofactor is Mg(2+). Mn(2+) serves as cofactor.

It carries out the reaction hydrogencarbonate + L-glutamine + 2 ATP + H2O = carbamoyl phosphate + L-glutamate + 2 ADP + phosphate + 2 H(+). The catalysed reaction is hydrogencarbonate + NH4(+) + 2 ATP = carbamoyl phosphate + 2 ADP + phosphate + 2 H(+). Its pathway is amino-acid biosynthesis; L-arginine biosynthesis; carbamoyl phosphate from bicarbonate: step 1/1. It participates in pyrimidine metabolism; UMP biosynthesis via de novo pathway; (S)-dihydroorotate from bicarbonate: step 1/3. Its function is as follows. Small subunit of the glutamine-dependent carbamoyl phosphate synthetase (CPSase). CPSase catalyzes the formation of carbamoyl phosphate from the ammonia moiety of glutamine, carbonate, and phosphate donated by ATP, constituting the first step of the biosynthetic pathway leading to pyrimidine nucleotides. The large subunit (synthetase) binds the substrates ammonia (free or transferred from glutamine from the small subunit), hydrogencarbonate and ATP and carries out an ATP-coupled ligase reaction, activating hydrogencarbonate by forming carboxy phosphate which reacts with ammonia to form carbamoyl phosphate. This chain is Carbamoyl phosphate synthase pyrimidine-specific large chain (pyrAB), found in Halalkalibacterium halodurans (strain ATCC BAA-125 / DSM 18197 / FERM 7344 / JCM 9153 / C-125) (Bacillus halodurans).